We begin with the raw amino-acid sequence, 436 residues long: Glutamyl-tRNA reductase (436 aa).

Residues 49–52, S109, 114–116, and Q120 each bind substrate; these read TCNR and EGQ. C50 serves as the catalytic Nucleophile. 198-203 is a binding site for NADP(+); sequence GAGRMS.

It belongs to the glutamyl-tRNA reductase family. Homodimer.

The enzyme catalyses (S)-4-amino-5-oxopentanoate + tRNA(Glu) + NADP(+) = L-glutamyl-tRNA(Glu) + NADPH + H(+). It functions in the pathway porphyrin-containing compound metabolism; protoporphyrin-IX biosynthesis; 5-aminolevulinate from L-glutamyl-tRNA(Glu): step 1/2. The protein operates within porphyrin-containing compound metabolism; chlorophyll biosynthesis. Functionally, catalyzes the NADPH-dependent reduction of glutamyl-tRNA(Glu) to glutamate 1-semialdehyde (GSA). The protein is Glutamyl-tRNA reductase of Prochlorococcus marinus (strain MIT 9301).